The primary structure comprises 598 residues: Elongation factor 4 2 (598 aa).

The tr-type G domain occupies 2–184 (KHIRNFCIIA…GIVKNLPAPK (183 aa)). GTP-binding positions include 14–19 (DHGKST) and 131–134 (NKID).

The protein belongs to the TRAFAC class translation factor GTPase superfamily. Classic translation factor GTPase family. LepA subfamily.

It is found in the cell inner membrane. It carries out the reaction GTP + H2O = GDP + phosphate + H(+). Functionally, required for accurate and efficient protein synthesis under certain stress conditions. May act as a fidelity factor of the translation reaction, by catalyzing a one-codon backward translocation of tRNAs on improperly translocated ribosomes. Back-translocation proceeds from a post-translocation (POST) complex to a pre-translocation (PRE) complex, thus giving elongation factor G a second chance to translocate the tRNAs correctly. Binds to ribosomes in a GTP-dependent manner. This chain is Elongation factor 4 2, found in Rhodopirellula baltica (strain DSM 10527 / NCIMB 13988 / SH1).